A 291-amino-acid chain; its full sequence is Undecaprenyl-diphosphatase 2 (291 aa).

Transmembrane regions (helical) follow at residues 39 to 59, 85 to 105, 118 to 138, 203 to 223, 231 to 251, and 262 to 282; these read PGAAFTAITQIGTEAAVLIYF, AQMGWLVIVGSIPIGVLGVTL, ITATMLIVMGVILGIADRLAA, FLLAIPAVLASGVFELKDAAA, PTVFATVIAFVSGYAVIAWFM, and FVWYRIALGIAIIALVATGAL.

This sequence belongs to the UppP family.

Its subcellular location is the cell membrane. It carries out the reaction di-trans,octa-cis-undecaprenyl diphosphate + H2O = di-trans,octa-cis-undecaprenyl phosphate + phosphate + H(+). Catalyzes the dephosphorylation of undecaprenyl diphosphate (UPP). Confers resistance to bacitracin. The protein is Undecaprenyl-diphosphatase 2 of Streptomyces avermitilis (strain ATCC 31267 / DSM 46492 / JCM 5070 / NBRC 14893 / NCIMB 12804 / NRRL 8165 / MA-4680).